We begin with the raw amino-acid sequence, 396 residues long: Anaerobic glycerol-3-phosphate dehydrogenase subunit C (396 aa).

2 consecutive 4Fe-4S ferredoxin-type domains span residues 2-29 (NDTS…PGYP) and 45-76 (DGAL…GDII). Positions 9, 12, 15, 19, 56, 59, 62, and 66 each coordinate [4Fe-4S] cluster.

As to quaternary structure, composed of a catalytic GlpA/B dimer and of GlpC.

It is found in the cell inner membrane. Its pathway is polyol metabolism; glycerol degradation via glycerol kinase pathway; glycerone phosphate from sn-glycerol 3-phosphate (anaerobic route): step 1/1. Its function is as follows. Electron transfer protein; may also function as the membrane anchor for the GlpAB dimer. The chain is Anaerobic glycerol-3-phosphate dehydrogenase subunit C (glpC) from Escherichia coli O157:H7.